The chain runs to 91 residues: Small ribosomal subunit protein uS19 (91 aa).

The protein belongs to the universal ribosomal protein uS19 family.

In terms of biological role, protein S19 forms a complex with S13 that binds strongly to the 16S ribosomal RNA. This Parasynechococcus marenigrum (strain WH8102) protein is Small ribosomal subunit protein uS19.